Here is a 68-residue protein sequence, read N- to C-terminus: Non-specific lipid-transfer protein 2 (68 aa).

This sequence belongs to the plant LTP family.

Its function is as follows. Plant non-specific lipid-transfer proteins transfer phospholipids as well as galactolipids across membranes. May play a role in wax or cutin deposition in the cell walls of expanding epidermal cells and certain secretory tissues. The protein is Non-specific lipid-transfer protein 2 of Prunus armeniaca (Apricot).